The chain runs to 365 residues: Beta-parvin (365 aa).

Over residues 1–12 the composition is skewed to pro residues; the sequence is MSSAPPRSPTPR. Positions 1–52 are disordered; it reads MSSAPPRSPTPRAPKMKKDESFLGKLGGTLARKKKTREVTDLQEEGKSAINS. A Phosphoserine modification is found at S8. The segment covering 37-47 has biased composition (basic and acidic residues); the sequence is REVTDLQEEGK. 2 Calponin-homology (CH) domains span residues 88 to 195 and 255 to 362; these read KELV…MHFR and NLVK…TKYK.

The protein belongs to the parvin family. As to quaternary structure, interacts with ILK, ARHGEF6, PXN (via LD motifs), ACTN2 and actin. Interacts with DYSF. In terms of processing, phosphorylated by ILK. In terms of tissue distribution, expressed predominantly in heart and moderately in spleen, lung and skeletal muscle.

It is found in the cell junction. The protein resides in the focal adhesion. Its subcellular location is the cell membrane. The protein localises to the cytoplasm. It localises to the cytoskeleton. It is found in the cell projection. The protein resides in the lamellipodium. Its subcellular location is the myofibril. The protein localises to the sarcomere. It localises to the z line. Functionally, adapter protein that plays a role in integrin signaling via ILK and in activation of the GTPases CDC42 and RAC1 by guanine exchange factors, such as ARHGEF6. Is involved in the reorganization of the actin cytoskeleton and formation of lamellipodia. Plays a role in cell adhesion, cell spreading, establishment or maintenance of cell polarity, and cell migration. The sequence is that of Beta-parvin (Parvb) from Mus musculus (Mouse).